The sequence spans 172 residues: MPGIVELPSLEDLKVQEVKVSSSVLKAAAHHYGAQCDKPNKEFMLCRWEEKDPRRCLEEGKLVNQCALEFFRQIKRHCAEPFTEYWTCIDYSGLQLFRRCRKQQAQFDECVLDKLGWVRPDLGDLSKVTKVKTDRPLPENPYHSRARPEPNPEVEGDLKPARHGSRLFFWTM.

CHCH domains lie at 33–74 and 75–118; these read GAQC…FRQI and KRHC…LGWV. Short sequence motifs (cx9C motif) lie at residues 36–46, 56–66, 78–88, and 100–110; these read CDKPNKEFMLC, CLEEGKLVNQC, CAEPFTEYWTC, and CRKQQAQFDEC. Disulfide bonds link Cys36/Cys66, Cys46/Cys56, Cys78/Cys110, and Cys88/Cys100. A disordered region spans residues 133–159; that stretch reads TDRPLPENPYHSRARPEPNPEVEGDLK. Residues 146 to 159 show a composition bias toward basic and acidic residues; it reads ARPEPNPEVEGDLK.

The protein belongs to the complex I NDUFA8 subunit family. In terms of assembly, complex I is composed of 45 different subunits.

It is found in the mitochondrion inner membrane. Its subcellular location is the mitochondrion intermembrane space. It localises to the mitochondrion. Functionally, accessory subunit of the mitochondrial membrane respiratory chain NADH dehydrogenase (Complex I), that is believed not to be involved in catalysis. Complex I functions in the transfer of electrons from NADH to the respiratory chain. The immediate electron acceptor for the enzyme is believed to be ubiquinone. The sequence is that of NADH dehydrogenase [ubiquinone] 1 alpha subcomplex subunit 8 (NDUFA8) from Bos taurus (Bovine).